Reading from the N-terminus, the 133-residue chain is Type VI secretion amidase effector 2 protein (133 aa).

Active-site residues include Cys-23 and His-73.

The protein belongs to the cell wall amidase Dae2/Tae2-like family.

It is found in the host periplasm. The protein localises to the secreted. The protein operates within cell wall degradation; peptidoglycan degradation. Its function is as follows. Toxic component of a contact-dependent interbacterial competition system (also called effector-immunity systems). Secreted by the SPI-6 type VI secretion system, probably into the periplasm of bacterial target cells. A cell wall amidase with specificity toward the D-meso-DAP-D-alanine bond (D-meso-diaminopimelic-D-alanine) found in peptidoglycan of Gram-negative bacteria. Toxicity is counteracted by a cognate immunity protein Tai2 (t2585), but not immunity proteins associated with a similar endopeptidase in other bacteria. In vitro degrades peptidoglycans from Gram-negative but not Gram-positive bacteria. This is Type VI secretion amidase effector 2 protein from Salmonella typhi.